The following is a 406-amino-acid chain: Peptide transporter imqD (406 aa).

Residues Met-1–Ser-25 form a disordered region. The span at Ser-14 to Ser-25 shows a compositional bias: low complexity. A run of 6 helical transmembrane segments spans residues Gly-184–Ala-204, Ile-220–Ile-240, Ala-262–Ile-282, Val-309–Thr-329, Ala-344–Ile-364, and Leu-373–Ile-393.

Belongs to the major facilitator superfamily. Proton-dependent oligopeptide transporter (POT/PTR) (TC 2.A.17) family.

It is found in the membrane. Peptide transporter; part of the gene cluster that mediates the biosynthesis of imizoquins A to D, tripeptide-derived alkaloids that serve a protective role against oxidative stress that are essential for normal germination. The chain is Peptide transporter imqD from Aspergillus flavus (strain ATCC 200026 / FGSC A1120 / IAM 13836 / NRRL 3357 / JCM 12722 / SRRC 167).